Consider the following 302-residue polypeptide: HTH-type transcriptional regulator ArgP (302 aa).

Residues 4 to 60 (PDYRTLQALDAVIRERGFERAAQKLCITQSAVSQRIKQLENLFGQPLLVRTVPPRPT) form the HTH lysR-type domain. Positions 21–40 (FERAAQKLCITQSAVSQRIK) form a DNA-binding region, H-T-H motif.

This sequence belongs to the LysR transcriptional regulatory family. Homodimer.

Its function is as follows. Controls the transcription of genes involved in arginine and lysine metabolism. This Yersinia pseudotuberculosis serotype O:1b (strain IP 31758) protein is HTH-type transcriptional regulator ArgP.